The following is a 424-amino-acid chain: MATVPEIKIMRSESLGHRSDVSSPEAKLGMRVEDLWDEQKPQLSPNEKLNACFESIPVSAFPLSSDSQDIEIRSDTSLAEAVQTLSKFKVLSAPVVDVDAPEDASWIDRYIGIVEFPGIVVWLLHQLEPPSPRSPAVAASNGFSHDFTTDVLDNGDSAVTSGNFFEVLTSSELYKNTKVRDISGTFRWAPFLALQKENSFLTMLLLLSKYKMKSIPVVDLGVAKIENIITQSGVIHMLAECAGLLWFEDWGIKTLSEVGLPIMSKDHIIKIYEDEPVLQAFKLMRRKRIGGIPVIERNSEKPVGNISLRDVQFLLTAPEIYHDYRSITTKNFLVSVREHLEKCGDTSAPIMSGVIACTKNHTLKELILMLDAEKIHRIYVVDDFGNLEGLITLRDIIARLVHEPSGYFGDFFDGVMPLPENYRV.

Ala2 is subject to N-acetylalanine. Ser44 carries the post-translational modification Phosphoserine. CBS domains follow at residues 63 to 131, 185 to 244, 263 to 324, and 350 to 408; these read LSSD…EPPS, TFRW…CAGL, MSKD…YHDY, and IMSG…SGYF.

This sequence belongs to the 5'-AMP-activated protein kinase gamma subunit family. As to quaternary structure, subunit of a probable heterotrimeric complex consisting of an alpha catalytic (KIN10 or KIN11) subunit, and a beta (KINB) and a gamma (KING or SNF4) non-catalytic regulatory subunits. Interacts with HXK1 in mitochondrion. In terms of processing, sumoylated by SIZ1. As to expression, expressed in vegetative organs and, to lower extent, in reproductive organs.

It localises to the mitochondrion. Regulatory subunit of the probable trimeric SNF1-related protein kinase (SnRK) complex, which may play a role in a signal transduction cascade regulating gene expression and carbohydrate metabolism in higher plants. The SnRK complex may also be involved in the regulation of fatty acid synthesis by phosphorylation of acetyl-CoA carboxylase and in assimilation of nitrogen by phosphorylating nitrate reductase. The protein is SNF1-related protein kinase regulatory subunit gamma-1 (KING1) of Arabidopsis thaliana (Mouse-ear cress).